Consider the following 511-residue polypeptide: Maturase K (511 aa).

Belongs to the intron maturase 2 family. MatK subfamily.

The protein resides in the plastid. Its subcellular location is the chloroplast. In terms of biological role, usually encoded in the trnK tRNA gene intron. Probably assists in splicing its own and other chloroplast group II introns. The chain is Maturase K from Oryza nivara (Indian wild rice).